A 658-amino-acid chain; its full sequence is Outer dynein arm-docking complex subunit 1 (658 aa).

Coiled-coil stretches lie at residues Lys-11–Asn-156, Arg-186–Glu-234, and Asn-303–Gln-380. 2 disordered regions span residues Asp-496–His-552 and Gly-574–Asn-658. Ser-500, Ser-506, Ser-507, and Ser-509 each carry phosphoserine. Composition is skewed to low complexity over residues Ser-506–Leu-519, Gly-574–Gln-583, Thr-592–Leu-604, and Ser-621–Ser-639.

This sequence belongs to the ODA1/DCC2 family. Component of the outer dynein arm-docking complex along with ODAD2, ODAD3, ODAD4 and CLXN. Interacts with ODAD3. Interacts with ODAD4; this interaction may facilitate the recruitment and/or attachment of outer dynein arm docking complex proteins including ODAD1, ODAD3, and ODAD4 to ciliary axonemes. Interacts with DNAH9. Interacts with MNS1. Interacts with PIERCE1 and PIERCE2; the interactions link the outer dynein arms docking complex (ODA-DC) to the internal microtubule inner proteins (MIP) in cilium axoneme. As to expression, expressed in motile ciliated tissues.

It is found in the cytoplasm. The protein resides in the cytoskeleton. It localises to the cilium axoneme. In terms of biological role, component of the outer dynein arm-docking complex that mediates outer dynein arms (ODA) binding onto the doublet microtubule. Involved in mediating assembly of both ODAs and their axonemal docking complex onto ciliary microtubules. The polypeptide is Outer dynein arm-docking complex subunit 1 (Odad1) (Mus musculus (Mouse)).